We begin with the raw amino-acid sequence, 50 residues long: Small ribosomal subunit protein eS31 (50 aa).

Residues C22, C25, C40, and C43 each coordinate Zn(2+). The segment at 22-43 (CPRCGPGVFMADHGDRWACGKC) adopts a C4-type zinc-finger fold.

The protein belongs to the eukaryotic ribosomal protein eS31 family. In terms of assembly, part of the 30S ribosomal subunit. Requires Zn(2+) as cofactor.

This chain is Small ribosomal subunit protein eS31, found in Pyrococcus horikoshii (strain ATCC 700860 / DSM 12428 / JCM 9974 / NBRC 100139 / OT-3).